A 269-amino-acid chain; its full sequence is Bis(5'-nucleosyl)-tetraphosphatase, symmetrical (269 aa).

Belongs to the Ap4A hydrolase family.

It catalyses the reaction P(1),P(4)-bis(5'-adenosyl) tetraphosphate + H2O = 2 ADP + 2 H(+). Functionally, hydrolyzes diadenosine 5',5'''-P1,P4-tetraphosphate to yield ADP. This chain is Bis(5'-nucleosyl)-tetraphosphatase, symmetrical, found in Vibrio cholerae serotype O1 (strain ATCC 39541 / Classical Ogawa 395 / O395).